The chain runs to 313 residues: 2-phosphoglycerate kinase (313 aa).

Residues 8–95 (SRILVTDKEY…LWRRVLKKHS (88 aa)) enclose the ATP-cone domain.

Belongs to the 2-phosphoglycerate kinase family. It depends on a divalent metal cation as a cofactor.

It catalyses the reaction (2R)-2-phosphoglycerate + ATP = (2R)-2,3-bisphosphoglycerate + ADP + H(+). The protein operates within thermoadapter biosynthesis; cyclic 2,3-diphosphoglycerate biosynthesis; cyclic 2,3-diphosphoglycerate from 2-phospho-D-glycerate: step 1/2. In terms of biological role, catalyzes the phosphorylation of 2-phosphoglycerate to 2,3-diphosphoglycerate. Involved in the biosynthesis of cyclic 2,3-bisphosphoglycerate, a thermoprotectant. The polypeptide is 2-phosphoglycerate kinase (Methanococcus maripaludis (strain C6 / ATCC BAA-1332)).